A 510-amino-acid polypeptide reads, in one-letter code: 2,3-bisphosphoglycerate-independent phosphoglycerate mutase (510 aa).

Residues D11 and S61 each coordinate Mn(2+). Catalysis depends on S61, which acts as the Phosphoserine intermediate. Substrate is bound by residues H124, 154 to 155 (RD), R185, R191, 260 to 263 (RPDR), and K333. Mn(2+) is bound by residues D398, H402, D439, H440, and H457.

Belongs to the BPG-independent phosphoglycerate mutase family. Monomer. Mn(2+) is required as a cofactor.

It catalyses the reaction (2R)-2-phosphoglycerate = (2R)-3-phosphoglycerate. The protein operates within carbohydrate degradation; glycolysis; pyruvate from D-glyceraldehyde 3-phosphate: step 3/5. Catalyzes the interconversion of 2-phosphoglycerate and 3-phosphoglycerate. In Mycoplasma mobile (strain ATCC 43663 / 163K / NCTC 11711) (Mesomycoplasma mobile), this protein is 2,3-bisphosphoglycerate-independent phosphoglycerate mutase.